We begin with the raw amino-acid sequence, 73 residues long: Sec-independent protein translocase protein TatA (73 aa).

The chain crosses the membrane as a helical span at residues 1–21 (MFGLGAPELILILILALIIFG). The interval 52-73 (EAAKIDDGNNNSDKEKATRQAS) is disordered.

The protein belongs to the TatA/E family. In terms of assembly, forms a complex with TatC.

The protein resides in the cell membrane. Part of the twin-arginine translocation (Tat) system that transports large folded proteins containing a characteristic twin-arginine motif in their signal peptide across membranes. TatA could form the protein-conducting channel of the Tat system. This is Sec-independent protein translocase protein TatA from Moorella thermoacetica (strain ATCC 39073 / JCM 9320).